A 1484-amino-acid polypeptide reads, in one-letter code: Ral GTPase-activating protein subunit beta (1484 aa).

2 disordered regions span residues 355–437 (PRSD…APRR) and 699–728 (ENNL…PDSE). S359 carries the post-translational modification Phosphoserine. T363 and T379 each carry phosphothreonine. Polar residues-rich tracts occupy residues 369-381 (SMPQ…TTPP), 392-428 (NKAT…TSSE), and 701-725 (NLKS…PTTP). S421 and S710 each carry phosphoserine. T724 carries the phosphothreonine modification. Residues 1138–1382 (IGYLDLLPCR…TTLEKEVPVI (245 aa)) form the Rap-GAP domain. S1275 is modified (phosphoserine). Residues 1297–1325 (PNHTDSLNSSQRLSPSSRMKKLPQGRPVP) form a disordered region. Residues 1302 to 1313 (SLNSSQRLSPSS) show a composition bias toward low complexity.

As to quaternary structure, component of the heterodimeric RalGAP1 complex with RALGAPA1 and of the heterodimeric RalGAP2 complex with RALGAPA2. Heterodimerization is required for activity. In terms of tissue distribution, abundantly expressed in testis, pancreas, lung, thymus, brown fat, and white fat. Expressed at lower levels in the brain.

Functionally, non-catalytic subunit of the heterodimeric RalGAP1 and RalGAP2 complexes which act as GTPase activators for the Ras-like small GTPases RALA and RALB. In Mus musculus (Mouse), this protein is Ral GTPase-activating protein subunit beta (Ralgapb).